The primary structure comprises 320 residues: tRNA dimethylallyltransferase (320 aa).

An ATP-binding site is contributed by 17–24 (GPTASGKT). 19–24 (TASGKT) is a substrate binding site. Interaction with substrate tRNA stretches follow at residues 42–45 (DSAL), 166–170 (QRIQR), and 249–254 (RCVGYR).

The protein belongs to the IPP transferase family. As to quaternary structure, monomer. Requires Mg(2+) as cofactor.

The enzyme catalyses adenosine(37) in tRNA + dimethylallyl diphosphate = N(6)-dimethylallyladenosine(37) in tRNA + diphosphate. Catalyzes the transfer of a dimethylallyl group onto the adenine at position 37 in tRNAs that read codons beginning with uridine, leading to the formation of N6-(dimethylallyl)adenosine (i(6)A). In Herminiimonas arsenicoxydans, this protein is tRNA dimethylallyltransferase.